Consider the following 438-residue polypeptide: Citrate synthase (438 aa).

Residues histidine 306 and aspartate 364 contribute to the active site.

The protein belongs to the citrate synthase family.

It carries out the reaction oxaloacetate + acetyl-CoA + H2O = citrate + CoA + H(+). The protein operates within carbohydrate metabolism; tricarboxylic acid cycle; isocitrate from oxaloacetate: step 1/2. This Bartonella quintana (strain Toulouse) (Rochalimaea quintana) protein is Citrate synthase (gltA).